The chain runs to 247 residues: Fasciclin-like arabinogalactan protein 6 (247 aa).

Positions 1–23 are cleaved as a signal peptide; it reads MSSSLFSYVVLLIFLFTIPYIQS. Residues 36-182 enclose the FAS1 domain; it reads PINLTAILEA…LAVYVVDSVL (147 aa). 5 N-linked (GlcNAc...) asparagine glycosylation sites follow: Asn-38, Asn-57, Asn-70, Asn-142, and Asn-153. Low complexity predominate over residues 192–212; sequence TTPTGAPAPKSSTSSSDADSP. Residues 192–221 form a disordered region; it reads TTPTGAPAPKSSTSSSDADSPAADDEHKSA. Gly-222 carries GPI-anchor amidated glycine lipidation. A propeptide spans 223-247 (removed in mature form); the sequence is SSVKRTSLGIVVSFALFCCSVIYIA.

This sequence belongs to the fasciclin-like AGP family.

It localises to the cell membrane. In terms of biological role, may be a cell surface adhesion protein. In Arabidopsis thaliana (Mouse-ear cress), this protein is Fasciclin-like arabinogalactan protein 6 (FLA6).